The chain runs to 857 residues: Elongation factor 2 (857 aa).

In terms of domain architecture, tr-type G spans 17–362; sequence ANIRNMSVIA…MITIHLPSPV (346 aa). Position 26–33 (26–33) interacts with GTP; the sequence is AHVDHGKS. Thr54, Thr57, and Thr59 each carry phosphothreonine. Lys152 bears the N6-succinyllysine mark. GTP is bound by residues 158 to 161 and 216 to 218; these read NKMD and SGL. Lys235 bears the N6-acetyllysine mark. N6-acetyllysine; alternate is present on Lys239. Lys239 participates in a covalent cross-link: Glycyl lysine isopeptide (Lys-Gly) (interchain with G-Cter in SUMO1); alternate. Residue Tyr265 is modified to Phosphotyrosine. Lys272 bears the N6-acetyllysine; alternate mark. Lys272 carries the N6-succinyllysine; alternate modification. Lys275 bears the N6-acetyllysine mark. Lys322 is covalently cross-linked (Glycyl lysine isopeptide (Lys-Gly) (interchain with G-Cter in SUMO)). Ser325 carries the phosphoserine modification. Tyr373 carries the phosphotyrosine modification. Position 435 is a phosphothreonine (Thr435). 2 positions are modified to N6-acetyllysine: Lys439 and Lys445. Ser502 is subject to Phosphoserine. Residue Lys525 is modified to N6,N6,N6-trimethyllysine. Residue Lys529 forms a Glycyl lysine isopeptide (Lys-Gly) (interchain with G-Cter in SUMO) linkage. Lys572 carries the post-translational modification N6-succinyllysine. Ser595 carries the post-translational modification Phosphoserine. Lys619 is subject to N6-acetyllysine. Residue His715 is modified to Diphthamide.

It belongs to the GTP-binding elongation factor family. EF-G/EF-2 subfamily. As to quaternary structure, binds to 80S ribosomes. Actively translating ribosomes show mutually exclusive binding of eIF5a (EIF5A or EIF5A2) and EEF2/eEF2. Interacts with SERBP1; interaction sequesters EEF2/eEF2 at the A-site of the ribosome, thereby blocking the interaction sites of the mRNA-tRNA complex, promoting ribosome stabilization and hibernation. Interacts with HABP4; interaction takes place at the A-site of hibernating ribosomes and promotes ribosome stabilization. Component of the mRNA surveillance SURF complex, at least composed of ERF1, ERF3 (ERF3A or ERF3B), EEF2, UPF1/RENT1, SMG1, SMG8 and SMG9. Interacts with RBPMS2. Post-translationally, phosphorylation by EF-2 kinase completely inactivates EF-2; it requires prior phosphorylation by CDK2 at Ser-595 during mitotic prometaphase. Phosphorylation by CSK promotes SUMOylation, proteolytic cleavage, and nuclear translocation if the C-terminal fragment. Diphthamide is 2-[3-carboxyamido-3-(trimethyl-ammonio)propyl]histidine. In terms of processing, ISGylated. Post-translationally, proteolytically processed at two sites following phosphorylation by CSK. SUMOylated following phosphorylation by CSK, promotes proteolytic cleavage.

Its subcellular location is the cytoplasm. The protein localises to the nucleus. The enzyme catalyses GTP + H2O = GDP + phosphate + H(+). Its function is as follows. Catalyzes the GTP-dependent ribosomal translocation step during translation elongation. During this step, the ribosome changes from the pre-translocational (PRE) to the post-translocational (POST) state as the newly formed A-site-bound peptidyl-tRNA and P-site-bound deacylated tRNA move to the P and E sites, respectively. Catalyzes the coordinated movement of the two tRNA molecules, the mRNA and conformational changes in the ribosome. In Oryctolagus cuniculus (Rabbit), this protein is Elongation factor 2 (EEF2).